Reading from the N-terminus, the 558-residue chain is NAD(P)H-quinone oxidoreductase chain 4 (558 aa).

Transmembrane regions (helical) follow at residues 25–45 (FPWLSLSILFPIFGSLVVPFI), 56–76 (WYALGIALVTFLITVGAYLKG), 111–131 (LILLTSFITALAVLAAWPVSF), 133–153 (PKLFFFLILAMDGGQIAVFAV), 157–177 (LLFFLAWELELLPVYLLLAIW), 189–209 (FIIYTAGSSLFILLAALAMGF), 230–250 (GFQLLCYGGLLIAFGVKLPVV), 264–284 (TAPVHMLLAGILLKMGGYALL), 298–318 (FAPLLIVLGVVNIIYAALTSF), 327–347 (IAYSSISHMGFVLIGIGSFSS), 353–373 (AMLQMVSHGLIGASLFFLVGA), 395–417 (IMFALWTTCSLASLALPGMSGFV), 438–458 (IVIAGLAAIGVILTPIYLLSM), and 485–505 (IYVIGSLLVPIIGIGLYPRIM).

Belongs to the complex I subunit 4 family.

It is found in the cellular thylakoid membrane. The enzyme catalyses a plastoquinone + NADH + (n+1) H(+)(in) = a plastoquinol + NAD(+) + n H(+)(out). It catalyses the reaction a plastoquinone + NADPH + (n+1) H(+)(in) = a plastoquinol + NADP(+) + n H(+)(out). NDH-1 shuttles electrons from NAD(P)H, via FMN and iron-sulfur (Fe-S) centers, to quinones in the respiratory chain. The immediate electron acceptor for the enzyme in this species is believed to be plastoquinone. Couples the redox reaction to proton translocation (for every two electrons transferred, four hydrogen ions are translocated across the cytoplasmic membrane), and thus conserves the redox energy in a proton gradient. This is NAD(P)H-quinone oxidoreductase chain 4 from Prochlorococcus marinus (strain MIT 9211).